The chain runs to 432 residues: Fibrinogen gamma chain (432 aa).

Positions 1–24 (MGRIGTPVFLAFLSALTCSLQVHA) are cleaved as a signal peptide. In terms of domain architecture, Fibrinogen C-terminal spans 169–412 (KISPITGKDC…MTTMKLLPMG (244 aa)). Cysteine 178 and cysteine 207 are joined by a disulfide. A glycan (N-linked (GlcNAc...) asparagine) is linked at asparagine 227. The Ca(2+) site is built by aspartate 340, aspartate 342, tyrosine 344, and glycine 346. A disulfide bond links cysteine 348 and cysteine 361. A disordered region spans residues 413–432 (RDLSGHGGQQQSKGNSRGDN). Residues 421 to 432 (QQQSKGNSRGDN) show a composition bias toward polar residues.

In terms of assembly, heterohexamer; disulfide linked. Contains 2 sets of 3 non-identical chains (alpha, beta and gamma). The 2 heterotrimers are in head to head conformation with the N-termini in a small central domain. In terms of processing, conversion of fibrinogen to fibrin is triggered by thrombin, which cleaves fibrinopeptides A and B from alpha and beta chains, and thus exposes the N-terminal polymerization sites responsible for the formation of the soft clot. The soft clot is converted into the hard clot by factor XIIIA which catalyzes the epsilon-(gamma-glutamyl)lysine cross-linking between gamma chains (stronger) and between alpha chains (weaker) of different monomers.

The protein localises to the secreted. Its function is as follows. Together with fibrinogen alpha (FGA) and fibrinogen beta (FGB), polymerizes to form an insoluble fibrin matrix. Has a major function in hemostasis as one of the primary components of blood clots. This chain is Fibrinogen gamma chain (FGG), found in Petromyzon marinus (Sea lamprey).